The sequence spans 497 residues: MEIIPNLSIETWVLLATSLMLFYIYGTYSHGLFKKLGIPGPKPVPLFGTIFNYGDGMWKFDDDCYKKYGKIWGFYEGPQPFLAIMDPEIIKMVLVKECYSVFTNRRCFGPMGFMKKAITMSEDEEWKRLRTILSPTFTSGKLKEMFPLMRQYGDTLLKNLRREEAKGEPINMKDIFGAYSMDVITGTSFGVNVDSLNNPQDPFVQKAKKILKFQIFDPFLLSVVLFPFLTPIYEMLNFSIFPRQSMNFFKKFVKTMKKNRLDSNQKNRVDFLQLMMNTQNSKGQESQKALSDLEMAAQAIIFIFGGYDATSTSISFIMYELATRPNVQKKLQNEIDRALPNKAPVTYDALMEMEYLDMVVNESLRLYPIATRLDRVSKKDVEINGVFIPKGTVVTIPIYPLHRNPEYWLEPEEFNPERFSKENKGSIDPYVYLPFGNGPRNCIGMRFALISMKLAVIGVLQNFNIQPCEKTQIPLKISRQPIFQPEGPIILKLVSRD.

Cys-442 serves as a coordination point for heme.

Belongs to the cytochrome P450 family. Requires heme as cofactor.

It localises to the endoplasmic reticulum membrane. The protein localises to the microsome membrane. It carries out the reaction an organic molecule + reduced [NADPH--hemoprotein reductase] + O2 = an alcohol + oxidized [NADPH--hemoprotein reductase] + H2O + H(+). Its function is as follows. Catalyzes 16-beta- and 6-alpha-hydroxylations of testosterone. This is Cytochrome P450 3A18 (Cyp3a18) from Rattus norvegicus (Rat).